We begin with the raw amino-acid sequence, 93 residues long: Putative regulatory protein Clos_1422 (93 aa).

The protein belongs to the RemA family.

In Alkaliphilus oremlandii (strain OhILAs) (Clostridium oremlandii (strain OhILAs)), this protein is Putative regulatory protein Clos_1422.